Here is a 461-residue protein sequence, read N- to C-terminus: MSQGKVVQIIGAVVDIEFPQDAVPRVYDALRVTEGDLSGLTLEVQQQLGGGVVRGIALGTTDGLKRGLTVENTGNPIMVPVGTKTLGRIMDVLGNPIDEAGPIGEEERMSIHREAPSYEDQSSSVELLETGIKVIDLVCPFAKGGKVGLFGGAGVGKTVNMMELIRNIAIEHSGFSVFAGVGERTREGNDFYHEMNDSNVLDKVSLVYGQMNEPPGNRLRVALTGLTMAEKFRDEGRDVLFFVDNIYRYTLAGTEVSALLGRMPSAVGYQPTLAEEMGVLQERITSTKTGSITSIQAVYVPADDLTDPSPATTFAHLDATVVLSRDIASLGIYPAVDPLDSTSRQLDPLVIGQEHYDVARGVQTVLQRYKELKDIIAILGMDELSEEDKQVVSRARKIQRFLSQPFFVAEVFTGAPGKYVSLKDTISGFKGILDGEYDHLPEQAFYMVGSIEEALEKAKKA.

Residue 151-158 participates in ATP binding; that stretch reads GGAGVGKT.

This sequence belongs to the ATPase alpha/beta chains family. In terms of assembly, F-type ATPases have 2 components, CF(1) - the catalytic core - and CF(0) - the membrane proton channel. CF(1) has five subunits: alpha(3), beta(3), gamma(1), delta(1), epsilon(1). CF(0) has three main subunits: a(1), b(2) and c(9-12). The alpha and beta chains form an alternating ring which encloses part of the gamma chain. CF(1) is attached to CF(0) by a central stalk formed by the gamma and epsilon chains, while a peripheral stalk is formed by the delta and b chains.

The protein localises to the cell inner membrane. It catalyses the reaction ATP + H2O + 4 H(+)(in) = ADP + phosphate + 5 H(+)(out). Its function is as follows. Produces ATP from ADP in the presence of a proton gradient across the membrane. The catalytic sites are hosted primarily by the beta subunits. The polypeptide is ATP synthase subunit beta (Alteromonas mediterranea (strain DSM 17117 / CIP 110805 / LMG 28347 / Deep ecotype)).